The primary structure comprises 311 residues: tRNA-cytidine(32) 2-sulfurtransferase (311 aa).

Residues 47–52 carry the PP-loop motif motif; it reads SGGKDS. Residues Cys122, Cys125, and Cys213 each contribute to the [4Fe-4S] cluster site.

The protein belongs to the TtcA family. As to quaternary structure, homodimer. It depends on Mg(2+) as a cofactor. The cofactor is [4Fe-4S] cluster.

The protein localises to the cytoplasm. The catalysed reaction is cytidine(32) in tRNA + S-sulfanyl-L-cysteinyl-[cysteine desulfurase] + AH2 + ATP = 2-thiocytidine(32) in tRNA + L-cysteinyl-[cysteine desulfurase] + A + AMP + diphosphate + H(+). Its pathway is tRNA modification. Functionally, catalyzes the ATP-dependent 2-thiolation of cytidine in position 32 of tRNA, to form 2-thiocytidine (s(2)C32). The sulfur atoms are provided by the cysteine/cysteine desulfurase (IscS) system. In Pectobacterium atrosepticum (strain SCRI 1043 / ATCC BAA-672) (Erwinia carotovora subsp. atroseptica), this protein is tRNA-cytidine(32) 2-sulfurtransferase.